Here is a 71-residue protein sequence, read N- to C-terminus: DNA-directed RNA polymerase subunit omega (71 aa).

It belongs to the RNA polymerase subunit omega family. As to quaternary structure, the RNAP catalytic core consists of 2 alpha, 1 beta, 1 beta' and 1 omega subunit. When a sigma factor is associated with the core the holoenzyme is formed, which can initiate transcription.

The enzyme catalyses RNA(n) + a ribonucleoside 5'-triphosphate = RNA(n+1) + diphosphate. Promotes RNA polymerase assembly. Latches the N- and C-terminal regions of the beta' subunit thereby facilitating its interaction with the beta and alpha subunits. The sequence is that of DNA-directed RNA polymerase subunit omega from Syntrophomonas wolfei subsp. wolfei (strain DSM 2245B / Goettingen).